The following is a 61-amino-acid chain: MAKTSQKVRNHRPAKFSSREYTRCERCGRPHSVYRKFGLCRICLKELGHKGQIPGLKKASW.

A compositionally biased stretch (basic residues) spans 1–14 (MAKTSQKVRNHRPA). The interval 1–20 (MAKTSQKVRNHRPAKFSSRE) is disordered. 4 residues coordinate Zn(2+): C24, C27, C40, and C43.

The protein belongs to the universal ribosomal protein uS14 family. Zinc-binding uS14 subfamily. As to quaternary structure, part of the 30S ribosomal subunit. Contacts proteins S3 and S10. Requires Zn(2+) as cofactor.

In terms of biological role, binds 16S rRNA, required for the assembly of 30S particles and may also be responsible for determining the conformation of the 16S rRNA at the A site. The chain is Small ribosomal subunit protein uS14 from Lactobacillus delbrueckii subsp. bulgaricus (strain ATCC 11842 / DSM 20081 / BCRC 10696 / JCM 1002 / NBRC 13953 / NCIMB 11778 / NCTC 12712 / WDCM 00102 / Lb 14).